A 566-amino-acid polypeptide reads, in one-letter code: Beta-1,4 N-acetylgalactosaminyltransferase 2 (566 aa).

The segment at 1–22 (MGSAGFSVGKFHVEVASRGREC) is ER exit and post-Golgi subcellular localization. At 1–67 (MGSAGFSVGK…HGRSRRQGSR (67 aa)) the chain is on the cytoplasmic side. The Vesicular targeting motif lies at 9 to 15 (GKFHVEV). Residues 68–88 (FLWLLKILVIILVLGIVGFMF) form a helical; Signal-anchor for type II membrane protein membrane-spanning segment. Topologically, residues 89-566 (GSMFLQAVFS…YFKNHLQCAA (478 aa)) are lumenal.

It belongs to the glycosyltransferase 2 family. As to quaternary structure, homodimer; disulfide-linked. In terms of tissue distribution, widely expressed. Highly expressed in colon and to a lesser extent in kidney, stomach, ileum and rectum.

It localises to the golgi apparatus. It is found in the trans-Golgi network membrane. The protein localises to the cytoplasmic vesicle membrane. It carries out the reaction an N-acetyl-alpha-neuraminyl-(2-&gt;3)-beta-D-galactosyl derivative + UDP-N-acetyl-alpha-D-galactosamine = an N-acetyl-beta-D-galactosaminyl-(1-&gt;4)-[N-acetyl-alpha-neuraminyl-(2-&gt;3)]-beta-D-galactosyl derivative + UDP + H(+). The enzyme catalyses a 3-O-{alpha-Neu5Ac-(2-&gt;3)-beta-D-Gal-(1-&gt;3)-[alpha-Neu5Ac-(2-&gt;6)]-alpha-D-GalNAc}-L-seryl-[protein] + UDP-N-acetyl-alpha-D-galactosamine = a 3-O-{[alpha-Neu5Ac-(2-&gt;3)]-beta-D-GalNAc-(1-&gt;4)-beta-D-Gal-(1-&gt;3)-[alpha-Neu5Ac-(2-&gt;6)]-alpha-D-GalNAc}-L-seryl-[protein] + UDP + H(+). The catalysed reaction is a 3-O-{alpha-Neu5Ac-(2-&gt;3)-beta-D-Gal-(1-&gt;3)-[alpha-Neu5Ac-(2-&gt;6)]-alpha-D-GalNAc}-L-threonyl-[protein] + UDP-N-acetyl-alpha-D-galactosamine = a 3-O-{[alpha-Neu5Ac-(2-&gt;3)]-beta-D-GalNAc-(1-&gt;4)-beta-D-Gal-(1-&gt;3)-[alpha-Neu5Ac-(2-&gt;6)]-alpha-D-GalNAc}-L-threonyl-[protein] + UDP + H(+). It catalyses the reaction a neolactoside IV(3)-alpha-NeuAc-nLc4Cer + UDP-N-acetyl-alpha-D-galactosamine = a neolactoside IV(4)-GalNAc,IV(3)-alpha-NeuAc-nLc4Cer + UDP + H(+). It participates in protein modification; protein glycosylation. The protein operates within glycolipid biosynthesis. Beta-1,4 N-acetylgalactosaminyltransferase involved in the biosynthesis of Sd(a) histo-blood group antigen. Catalyzes the transfer of N-acetylgalactosamine (GalNAc) group in a beta-1,4-linkage from UDP-GalNAc to the galactose residue of NeuAcalpha2-&gt;3Gal-R to form Sd(a) glycan epitope GalNAcbeta1-&gt;4(NeuAcalpha2-&gt;3)Gal-R. The Sd(a) epitope is carried in O- and N-linked glycoproteins and glycolipids, including O-linked core 1 structures on GYPA/glycophorin, SLC4A1 and SLC29A1 in erythrocytes, N-linked glycans attached to the Tamm-Horsfall glycoprotein UMOD/uromodulin in renal fluids, O-linked core 3 glycans on mucins in colon and neolactosides in gastric mucosa. Confers protection against influenza A virus strains that attach to NeuAcalpha2-&gt;3-carrying host receptors. Modifies N-glycan chains on host receptors and prevents virus entry into cells. The protein is Beta-1,4 N-acetylgalactosaminyltransferase 2 of Homo sapiens (Human).